The sequence spans 177 residues: Probable inosine/xanthosine triphosphatase (177 aa).

It belongs to the YjjX NTPase family. In terms of assembly, homodimer. It depends on Mg(2+) as a cofactor. The cofactor is Mn(2+).

It catalyses the reaction XTP + H2O = XDP + phosphate + H(+). It carries out the reaction ITP + H2O = IDP + phosphate + H(+). Phosphatase that hydrolyzes non-canonical purine nucleotides such as XTP and ITP to their respective diphosphate derivatives. Probably excludes non-canonical purines from DNA/RNA precursor pool, thus preventing their incorporation into DNA/RNA and avoiding chromosomal lesions. This Halalkalibacterium halodurans (strain ATCC BAA-125 / DSM 18197 / FERM 7344 / JCM 9153 / C-125) (Bacillus halodurans) protein is Probable inosine/xanthosine triphosphatase.